The chain runs to 417 residues: Phosphoglycerate kinase, cytosolic (417 aa).

(2R)-3-phosphoglycerate-binding residues include Val-23, Asp-24, Phe-25, Asn-26, Arg-39, Ser-61, His-62, Gly-64, Arg-65, Arg-132, His-168, and Arg-169. Gly-214 and Ala-215 together coordinate ADP. Gly-214 lines the CDP pocket. Residues Ala-215 and Lys-216 each coordinate AMP. Residue Ala-215 coordinates ATP. Ala-215 contributes to the Mg(2+) binding site. Lys-216 contributes to the (2R)-3-phosphoglycerate binding site. CDP is bound at residue Asp-219. Asp-219 serves as a coordination point for Mg(2+). ADP-binding residues include Lys-220 and Gly-238. Lys-220 contributes to the AMP binding site. Position 220 (Lys-220) interacts with ATP. A CDP-binding site is contributed by Gly-238. AMP-binding residues include Ala-239 and Ala-311. Positions 239 and 311 each coordinate ATP. 2 residues coordinate ADP: Ala-311 and Asn-335. Positions 336 and 341 each coordinate CDP. ADP contacts are provided by Phe-341, Glu-342, Asp-374, and Thr-375. AMP is bound at residue Glu-342. 3 residues coordinate ATP: Glu-342, Asp-374, and Thr-375. Asp-374 contributes to the Mg(2+) binding site.

It belongs to the phosphoglycerate kinase family. In terms of assembly, monomer. Mg(2+) is required as a cofactor.

The protein localises to the cytoplasm. The catalysed reaction is (2R)-3-phosphoglycerate + ATP = (2R)-3-phospho-glyceroyl phosphate + ADP. Its pathway is carbohydrate degradation; glycolysis; pyruvate from D-glyceraldehyde 3-phosphate: step 2/5. This is Phosphoglycerate kinase, cytosolic (PGKB) from Leishmania mexicana.